The chain runs to 149 residues: Large ribosomal subunit protein eL19 (149 aa).

Residues 46-99 (EDGTIEAKTAKGNSRGRARKRQQKRAYGHKKGHGSRKGRSGGRQNEKEDWQSRI) are disordered. Over residues 59–85 (SRGRARKRQQKRAYGHKKGHGSRKGRS) the composition is skewed to basic residues. A compositionally biased stretch (basic and acidic residues) spans 89–99 (QNEKEDWQSRI).

It belongs to the eukaryotic ribosomal protein eL19 family. As to quaternary structure, part of the 50S ribosomal subunit.

Binds to the 23S rRNA. This chain is Large ribosomal subunit protein eL19, found in Natronomonas pharaonis (strain ATCC 35678 / DSM 2160 / CIP 103997 / JCM 8858 / NBRC 14720 / NCIMB 2260 / Gabara) (Halobacterium pharaonis).